A 228-amino-acid polypeptide reads, in one-letter code: Homeobox protein Hox-B6a (228 aa).

The Antp-type hexapeptide motif lies at 132 to 137 (VYPWMQ). The homeobox DNA-binding region spans 150–209 (GRRGRQTYTRYQTLELEKEFHFNRYLTRRRRIEIAHALCLTERQIKIWFQNRRMKWKKEN).

Belongs to the Antp homeobox family.

The protein resides in the nucleus. Sequence-specific transcription factor which is part of a developmental regulatory system that provides cells with specific positional identities on the anterior-posterior axis. This chain is Homeobox protein Hox-B6a (hoxb6a), found in Danio rerio (Zebrafish).